The sequence spans 479 residues: Glutamyl-tRNA(Gln) amidotransferase subunit A (479 aa).

Active-site charge relay system residues include Lys74 and Ser149. The active-site Acyl-ester intermediate is Ser173.

This sequence belongs to the amidase family. GatA subfamily. In terms of assembly, heterotrimer of A, B and C subunits.

It carries out the reaction L-glutamyl-tRNA(Gln) + L-glutamine + ATP + H2O = L-glutaminyl-tRNA(Gln) + L-glutamate + ADP + phosphate + H(+). Functionally, allows the formation of correctly charged Gln-tRNA(Gln) through the transamidation of misacylated Glu-tRNA(Gln) in organisms which lack glutaminyl-tRNA synthetase. The reaction takes place in the presence of glutamine and ATP through an activated gamma-phospho-Glu-tRNA(Gln). This Cenarchaeum symbiosum (strain A) protein is Glutamyl-tRNA(Gln) amidotransferase subunit A.